A 284-amino-acid polypeptide reads, in one-letter code: Acetylglutamate kinase (284 aa).

Residues 64-65, arginine 86, and asparagine 179 contribute to the substrate site; that span reads GG.

This sequence belongs to the acetylglutamate kinase family. ArgB subfamily.

The protein localises to the cytoplasm. The catalysed reaction is N-acetyl-L-glutamate + ATP = N-acetyl-L-glutamyl 5-phosphate + ADP. Its pathway is amino-acid biosynthesis; L-arginine biosynthesis; N(2)-acetyl-L-ornithine from L-glutamate: step 2/4. Its function is as follows. Catalyzes the ATP-dependent phosphorylation of N-acetyl-L-glutamate. The polypeptide is Acetylglutamate kinase (Acaryochloris marina (strain MBIC 11017)).